Consider the following 359-residue polypeptide: tRNA-specific 2-thiouridylase MnmA (359 aa).

Residues 9–16 (GMSGGVDS) and Met-35 contribute to the ATP site. Cys-105 serves as the catalytic Nucleophile. Cys-105 and Cys-203 form a disulfide bridge. Residue Gly-129 participates in ATP binding. The interaction with tRNA stretch occupies residues 153-155 (KDQ). Cys-203 acts as the Cysteine persulfide intermediate in catalysis. An interaction with tRNA region spans residues 309-310 (RY).

Belongs to the MnmA/TRMU family.

It is found in the cytoplasm. The enzyme catalyses S-sulfanyl-L-cysteinyl-[protein] + uridine(34) in tRNA + AH2 + ATP = 2-thiouridine(34) in tRNA + L-cysteinyl-[protein] + A + AMP + diphosphate + H(+). In terms of biological role, catalyzes the 2-thiolation of uridine at the wobble position (U34) of tRNA, leading to the formation of s(2)U34. The chain is tRNA-specific 2-thiouridylase MnmA from Acetivibrio thermocellus (strain ATCC 27405 / DSM 1237 / JCM 9322 / NBRC 103400 / NCIMB 10682 / NRRL B-4536 / VPI 7372) (Clostridium thermocellum).